A 787-amino-acid polypeptide reads, in one-letter code: ATP-dependent zinc metalloprotease FtsH (787 aa).

Residues 1-5 (MNRKN) are Cytoplasmic-facing. The helical transmembrane segment at 6–26 (VIRMVTAIAVVVLLGWSFFYF) threads the bilayer. Residues 27-110 (SDDTRGYKFV…KVTTAVNEGS (84 aa)) are Extracellular-facing. A helical transmembrane segment spans residues 111–131 (ILGELLVYVLPLLLLVGLFVM). The Cytoplasmic segment spans residues 132–787 (FSRMQGGARM…VSPSNPPAHG (656 aa)). 203-210 (GPPGTGKT) is an ATP binding site. Zn(2+) is bound at residue His425. Residue Glu426 is part of the active site. 2 residues coordinate Zn(2+): His429 and Asp501. A disordered region spans residues 616-787 (DFGGRIPSDK…VSPSNPPAHG (172 aa)). 2 stretches are compositionally biased toward low complexity: residues 650–671 (AFKA…AAQS) and 700–709 (YGAPPGWHAP). Residues 710-720 (GWPPQQPPDYW) are compositionally biased toward pro residues. The segment covering 721-732 (YPPEQQPSQSPY) has biased composition (low complexity). A compositionally biased stretch (pro residues) spans 733–762 (WPQPAPSYPGQAPPPYPSYPPCPSYPPPGQ).

In the central section; belongs to the AAA ATPase family. It in the C-terminal section; belongs to the peptidase M41 family. Homohexamer. Zn(2+) is required as a cofactor.

The protein localises to the cell membrane. Its function is as follows. Acts as a processive, ATP-dependent zinc metallopeptidase for both cytoplasmic and membrane proteins. Plays a role in the quality control of integral membrane proteins. This Mycobacterium leprae (strain TN) protein is ATP-dependent zinc metalloprotease FtsH.